A 196-amino-acid polypeptide reads, in one-letter code: DPFMQALEQGLPAGVWTLAQVSQGRLDPEYRHHFYQATGWQEEVGLILPVRDGLTLMLFLGRLDKRSTLSRDELARLEGVFPLVHSLCRQQWQQSQPLLAQSTAQPDSTSLKSAVEQAMASVGGDRLTRRERQVAELLLQGLDTEAIAAALGIGNGTVKNHRKHLYGKLRLGSRAELFNLFLNHLITAPVGDIQTP.

Positions 120–185 constitute an HTH luxR-type domain; the sequence is ASVGGDRLTR…ELFNLFLNHL (66 aa). The segment at residues 144–163 is a DNA-binding region (H-T-H motif); that stretch reads TEAIAAALGIGNGTVKNHRK.

This chain is Putative HTH-type transcriptional regulator in exeN 3'region, found in Aeromonas salmonicida.